A 397-amino-acid polypeptide reads, in one-letter code: Elongation factor Tu (397 aa).

A tr-type G domain is found at 10-206; sequence KPHVNIGTIG…AIDSYIPTPE (197 aa). A G1 region spans residues 19 to 26; that stretch reads GHVDHGKT. A GTP-binding site is contributed by 19–26; sequence GHVDHGKT. Thr-26 is a Mg(2+) binding site. Positions 60 to 64 are G2; the sequence is GITIN. The interval 81–84 is G3; it reads DCPG. GTP-binding positions include 81-85 and 136-139; these read DCPGH and NKAD. The tract at residues 136 to 139 is G4; it reads NKAD. The segment at 174-176 is G5; sequence SAL.

The protein belongs to the TRAFAC class translation factor GTPase superfamily. Classic translation factor GTPase family. EF-Tu/EF-1A subfamily. Monomer.

The protein resides in the cytoplasm. It catalyses the reaction GTP + H2O = GDP + phosphate + H(+). Its function is as follows. GTP hydrolase that promotes the GTP-dependent binding of aminoacyl-tRNA to the A-site of ribosomes during protein biosynthesis. The polypeptide is Elongation factor Tu (Clostridium botulinum (strain Loch Maree / Type A3)).